The chain runs to 526 residues: Arylsulfatase G (526 aa).

An N-terminal signal peptide occupies residues 1–16 (MGWLFLKVLLVGMVFS). Ca(2+)-binding residues include D44, D45, and C84. C84 (nucleophile) is an active-site residue. A 3-oxoalanine (Cys) modification is found at C84. The N-linked (GlcNAc...) asparagine glycan is linked to N117. K137 is a binding site for substrate. Residue H139 is part of the active site. Residue S162 participates in substrate binding. N215 is a glycosylation site (N-linked (GlcNAc...) asparagine). H251 is a binding site for substrate. The Ca(2+) site is built by D302 and N303. N356 and N497 each carry an N-linked (GlcNAc...) asparagine glycan.

This sequence belongs to the sulfatase family. The cofactor is Ca(2+). In terms of processing, N-glycosylated with both high mannose and complex type sugars. The conversion to 3-oxoalanine (also known as C-formylglycine, FGly), of a serine or cysteine residue in prokaryotes and of a cysteine residue in eukaryotes, is critical for catalytic activity. Post-translationally, 63-kDa precursor undergoes proteolytic processing in two steps, yielding two fragments in the first step (apparent molecular masses of 44 and 18 kDa). In the second step, the 44-kDa fragment is processed further to the 34- and 10-kDa chains. The 10-kDa chain is a cleavage product of the 44-kDa fragment but linked to the 18-kDa chain through a disulfide bridge.

It is found in the lysosome. The enzyme catalyses an aryl sulfate + H2O = a phenol + sulfate + H(+). The catalysed reaction is Hydrolysis of the 3-sulfate groups of the N-sulfo-D-glucosamine 3-O-sulfate units of heparin.. Its function is as follows. Displays arylsulfatase activity at acidic pH towards the artificial substrate p-nitrocatechol sulfate. Catalyzes the hydrolysis of the 3-sulfate groups of the N-sulfo-D-glucosamine 3-O-sulfate units of heparin. The sequence is that of Arylsulfatase G (Arsg) from Rattus norvegicus (Rat).